Reading from the N-terminus, the 416-residue chain is UDP-N-acetylglucosamine 1-carboxyvinyltransferase (416 aa).

Phosphoenolpyruvate is bound at residue 22–23; the sequence is KN. UDP-N-acetyl-alpha-D-glucosamine is bound at residue R91. The active-site Proton donor is the C115. C115 is modified (2-(S-cysteinyl)pyruvic acid O-phosphothioketal). Residues 120-124, D305, and I327 contribute to the UDP-N-acetyl-alpha-D-glucosamine site; that span reads RPIDL.

This sequence belongs to the EPSP synthase family. MurA subfamily.

The protein resides in the cytoplasm. It catalyses the reaction phosphoenolpyruvate + UDP-N-acetyl-alpha-D-glucosamine = UDP-N-acetyl-3-O-(1-carboxyvinyl)-alpha-D-glucosamine + phosphate. Its pathway is cell wall biogenesis; peptidoglycan biosynthesis. Its function is as follows. Cell wall formation. Adds enolpyruvyl to UDP-N-acetylglucosamine. In Buchnera aphidicola subsp. Acyrthosiphon pisum (strain Tuc7), this protein is UDP-N-acetylglucosamine 1-carboxyvinyltransferase.